The sequence spans 539 residues: MGSPEDDLIGIPFPDHSSELLSCLNEQRQLGHLCDLTIRTQGLEYRTHRAVLAACSHYFKKLFTEGGGGAVMGAGGSGTATGGAGAGVCELDFVGPEALGALLEFAYTATLTTSSANMPAVLQAARLLEIPCVIAACMEILQGSGLEAPSPDEDDCERARQYLEAFATATASGVPNGEDSPPQVPLPPPPPPPPRPVARRSRKPRKAFLQTKGARANHLVPEVPTVPAHPLTYEEEEVAGRVGSSGGSGPGDSYSPPTGTASPPEGPQSYEPYEGEEEEEELVYPPAYGLAQGGGPPLSPEELGSDEDAIDPDLMAYLSSLHQDNLAPGLDSQDKLVRKRRSQMPQECPVCHKIIHGAGKLPRHMRTHTGEKPFACEVCGVRFTRNDKLKIHMRKHTGERPYSCPHCPARFLHSYDLKNHMHLHTGDRPYECHLCHKAFAKEDHLQRHLKGQNCLEVRTRRRRKDDAPPHYPPPSTAAASPAGLDLSNGHLDTFRLSLARFWEQSAPTGPPVSTPGPPDDDEEEGAPTTPQAEGAMESS.

Residues 34 to 115 (CDLTIRTQGL…AYTATLTTSS (82 aa)) enclose the BTB domain. Ser150 carries the phosphoserine modification. A disordered region spans residues 171–308 (ASGVPNGEDS…SPEELGSDED (138 aa)). Positions 182 to 196 (PQVPLPPPPPPPPRP) are enriched in pro residues. A compositionally biased stretch (basic residues) spans 197-206 (VARRSRKPRK). Residues Lys206 and Lys212 each carry the N6-acetyllysine; by EP300; alternate modification. Residues Lys206 and Lys212 each participate in a glycyl lysine isopeptide (Lys-Gly) (interchain with G-Cter in ubiquitin); alternate cross-link. A compositionally biased stretch (acidic residues) spans 273–282 (YEGEEEEEEL). Residue Lys335 is modified to N6-acetyllysine; by EP300; alternate. Residue Lys335 forms a Glycyl lysine isopeptide (Lys-Gly) (interchain with G-Cter in ubiquitin); alternate linkage. The segment at 344–400 (MPQECPVCHKIIHGAGKLPRHMRTHTGEKPFACEVCGVRFTRNDKLKIHMRKHTGER) is required for interaction with and acetylation by EP300. The segment at 346–368 (QECPVCHKIIHGAGKLPRHMRTH) adopts a C2H2-type 1 zinc-finger fold. Thr369 is subject to Phosphothreonine. 2 C2H2-type zinc fingers span residues 374–396 (FACE…MRKH) and 402–424 (YSCP…MHLH). The C2H2-type 4; atypical zinc-finger motif lies at 430 to 454 (YECHLCHKAFAKEDHLQRHLKGQNC). Disordered stretches follow at residues 458–486 (RTRR…GLDL) and 501–539 (FWEQ…MESS). Residues 508–517 (TGPPVSTPGP) show a composition bias toward pro residues.

As to quaternary structure, homodimerizes. Interacts with NCL, NEDD4 and YBX1. Interacts with HNRNPU (via RNA-binding RGG-box region); the interaction facilitates the recruitment of long non-coding RNA Blnc1 by ZBTB7B. Interacts with HDAC4 and HDAC5; the interaction allows the recruitment of HDAC4 and HDAC5 on CD8 loci for deacetylation and possible inhibition of CD8 genes expression. In terms of processing, acetylated directly and specifically by EP300. EP300-mediated acetylation of Lys-206, Lys-212 and Lys-335 stabilizes the protein by antagonizing ubiquitin conjugation. Post-translationally, ubiquitinated, leading to proteasomal degradation. Competes with acetylation on Lys-206, Lys-212 and Lys-335.

It localises to the nucleus. Functionally, transcription regulator that acts as a key regulator of lineage commitment of immature T-cell precursors. Exerts distinct biological functions in the mammary epithelial cells and T cells in a tissue-specific manner. Necessary and sufficient for commitment of CD4 lineage, while its absence causes CD8 commitment. Development of immature T-cell precursors (thymocytes) to either the CD4 helper or CD8 killer T-cell lineages correlates precisely with their T-cell receptor specificity for major histocompatibility complex class II or class I molecules, respectively. Cross-antagonism between ZBTB7B and CBF complexes are determinative to CD4 versus CD8 cell fate decision. Suppresses RUNX3 expression and imposes CD4+ lineage fate by inducing the SOCS suppressors of cytokine signaling. induces, as a transcriptional activator, SOCS genes expression which represses RUNX3 expression and promotes the CD4+ lineage fate. During CD4 lineage commitment, associates with multiple sites at the CD8 locus, acting as a negative regulator of the CD8 promoter and enhancers by epigenetic silencing through the recruitment of class II histone deacetylases, such as HDAC4 and HDAC5, to these loci. Regulates the development of IL17-producing CD1d-restricted naural killer (NK) T cells. Also functions as an important metabolic regulator in the lactating mammary glands. Critical feed-forward regulator of insulin signaling in mammary gland lactation, directly regulates expression of insulin receptor substrate-1 (IRS-1) and insulin-induced Akt-mTOR-SREBP signaling. Transcriptional repressor of the collagen COL1A1 and COL1A2 genes. May also function as a repressor of fibronectin and possibly other extracellular matrix genes. Potent driver of brown fat development, thermogenesis and cold-induced beige fat formation. Recruits the brown fat lncRNA 1 (Blnc1):HNRNPU ribonucleoprotein complex to activate thermogenic gene expression in brown and beige adipocytes. This chain is Zinc finger and BTB domain-containing protein 7B, found in Homo sapiens (Human).